Consider the following 500-residue polypeptide: Probable cytochrome P450 514A2 (500 aa).

The chain crosses the membrane as a helical span at residues 4 to 24 (IYTIILTIIILVLIISIKDLF). Heme is bound at residue cysteine 446.

The protein belongs to the cytochrome P450 family. It depends on heme as a cofactor.

The protein resides in the membrane. The protein is Probable cytochrome P450 514A2 (cyp514A2) of Dictyostelium discoideum (Social amoeba).